A 316-amino-acid polypeptide reads, in one-letter code: Small ribosomal subunit biogenesis GTPase RsgA (316 aa).

The region spanning 83–248 (DQYKSKLFAA…LIDSPGFQEF (166 aa)) is the CP-type G domain. GTP-binding positions include 131–134 (NKTD) and 185–193 (GQSGMGKST). Positions 272, 277, 279, and 285 each coordinate Zn(2+).

Belongs to the TRAFAC class YlqF/YawG GTPase family. RsgA subfamily. In terms of assembly, monomer. Associates with 30S ribosomal subunit, binds 16S rRNA. The cofactor is Zn(2+).

It is found in the cytoplasm. Its function is as follows. One of several proteins that assist in the late maturation steps of the functional core of the 30S ribosomal subunit. Helps release RbfA from mature subunits. May play a role in the assembly of ribosomal proteins into the subunit. Circularly permuted GTPase that catalyzes slow GTP hydrolysis, GTPase activity is stimulated by the 30S ribosomal subunit. The protein is Small ribosomal subunit biogenesis GTPase RsgA of Paraburkholderia phytofirmans (strain DSM 17436 / LMG 22146 / PsJN) (Burkholderia phytofirmans).